The chain runs to 84 residues: U8-theraphotoxin-Hhn1c 1 (84 aa).

Residues 1-21 (MKVVLIVCLVWVMAMMELVSC) form the signal peptide. Intrachain disulfides connect C23/C35, C29/C44, C34/C67, C54/C75, and C69/C81.

This sequence belongs to the AVIT (prokineticin) family. In terms of tissue distribution, expressed by the venom gland.

Its subcellular location is the secreted. This Cyriopagopus hainanus (Chinese bird spider) protein is U8-theraphotoxin-Hhn1c 1.